A 1083-amino-acid polypeptide reads, in one-letter code: Glutamate receptor-interacting protein 2 (1083 aa).

3 consecutive PDZ domains span residues 58–141 (IVEL…EYEL), 156–244 (TIEI…EYDV), and 258–342 (LVEI…LPAH). Residues 408-422 (AGTPGFSSQNSNTLP) show a composition bias toward polar residues. Residues 408–460 (AGTPGFSSQNSNTLPRTVHPMSPRTTMNRRRQKRKDHKSSLSLASSTVGPGGQ) form a disordered region. The span at 434 to 444 (MNRRRQKRKDH) shows a compositional bias: basic residues. 3 PDZ domains span residues 468 to 555 (EIIL…EIEF), 569 to 652 (HVKL…RKDE), and 667 to 749 (TVEL…KKQT). 3 disordered regions span residues 754–783 (PQRL…LSEI), 853–872 (NEQD…GLET), and 936–965 (GSHH…VHNA). Over residues 774–783 (SQKTSKLSEI) the composition is skewed to polar residues. A compositionally biased stretch (basic and acidic residues) spans 945 to 963 (PKKENKLSQDARSKKEEVH). The region spanning 974 to 1056 (KVTVQKDMDT…RLDLVISRGL (83 aa)) is the PDZ 7 domain.

The protein belongs to the GRIP2 family. As to expression, enriched in the mitochondrial cloud of stage I oocytes, before becoming concentrated at the tip of the vegetal cortex in stage II oocytes. Expression becomes localized to the germ plasm of stage III-IV oocytes and early cleavage stages. At the tailbud stage, localizes to the migrating primordial germ cells (PGCs) until PGC migration is complete (stage 40), at which point expression disappears. In the adult, expressed in the brain, ovary, eye, muscle, spinal cord and very weakly in adipocytes.

The protein localises to the cytoplasm. Functionally, plays an important role in primordial germ cell (PGC) maintenance and efficiency of PGC migration. This is Glutamate receptor-interacting protein 2 from Xenopus laevis (African clawed frog).